The primary structure comprises 52 residues: Small, acid-soluble spore protein K (52 aa).

The segment at 1–52 is disordered; the sequence is MGKQAEFWSESKNNSKIDGQPKAKSRFASKRPNGTINTHPQERMRAANQQEE.

This sequence belongs to the SspK family.

It localises to the spore core. The chain is Small, acid-soluble spore protein K from Bacillus anthracis (strain A0248).